The chain runs to 938 residues: AP-2 complex subunit alpha-2 (938 aa).

A 1,2-diacyl-sn-glycero-3-phospho-(1D-myo-inositol-3,4,5-trisphosphate) is bound by residues 11–12 (RG), Lys-43, Tyr-53, and 57–61 (KYVCK). The segment at 615-681 (LKKKKGPSTV…TGPPPSSGGG (67 aa)) is disordered. Over residues 646–667 (PASTSAASTPSPSADLLGLGAV) the composition is skewed to low complexity. A compositionally biased stretch (pro residues) spans 668 to 677 (PPAPTGPPPS).

The protein belongs to the adaptor complexes large subunit family. Adaptor protein complex 2 (AP-2) is a heterotetramer composed of two large adaptins (alpha-type subunit AP2A1 or AP2A2 and beta-type subunit AP2B1), a medium adaptin (mu-type subunit AP2M1) and a small adaptin (sigma-type subunit AP2S1). Interacts with clathrin. Binds EPN1, EPS15, AMPH, SNAP91 and BIN1. Interacts with HIP1. Interacts with DGKD. Interacts with DENND1A, DENND1B and DENND1C. Interacts with FCHO1 and DAB2. Interacts with ATAT1; this interaction is required for efficient alpha-tubulin acetylation by ATAT1. Interacts with KIAA1107. Together with AP2B1 and AP2M1, it interacts with ADAM10; this interaction facilitates ADAM10 endocytosis from the plasma membrane during long-term potentiation in hippocampal neurons. Interacts with CLN3 (via dileucine motif). Interacts with ABCB11; this interaction regulates cell membrane expression of ABCB11 through its internalization in a clathrin-dependent manner and its subsequent degradation. Interacts with Cacfd1. Interacts with DNAJC6. As to expression, widely expressed.

The protein resides in the cell membrane. It localises to the membrane. Its subcellular location is the coated pit. Functionally, component of the adaptor protein complex 2 (AP-2). Adaptor protein complexes function in protein transport via transport vesicles in different membrane traffic pathways. Adaptor protein complexes are vesicle coat components and appear to be involved in cargo selection and vesicle formation. AP-2 is involved in clathrin-dependent endocytosis in which cargo proteins are incorporated into vesicles surrounded by clathrin (clathrin-coated vesicles, CCVs) which are destined for fusion with the early endosome. The clathrin lattice serves as a mechanical scaffold but is itself unable to bind directly to membrane components. Clathrin-associated adaptor protein (AP) complexes which can bind directly to both the clathrin lattice and to the lipid and protein components of membranes are considered to be the major clathrin adaptors contributing the CCV formation. AP-2 also serves as a cargo receptor to selectively sort the membrane proteins involved in receptor-mediated endocytosis. AP-2 seems to play a role in the recycling of synaptic vesicle membranes from the presynaptic surface. AP-2 recognizes Y-X-X-[FILMV] (Y-X-X-Phi) and [ED]-X-X-X-L-[LI] endocytosis signal motifs within the cytosolic tails of transmembrane cargo molecules. AP-2 may also play a role in maintaining normal post-endocytic trafficking through the ARF6-regulated, non-clathrin pathway. During long-term potentiation in hippocampal neurons, AP-2 is responsible for the endocytosis of ADAM10. The AP-2 alpha subunit binds polyphosphoinositide-containing lipids, positioning AP-2 on the membrane. The AP-2 alpha subunit acts via its C-terminal appendage domain as a scaffolding platform for endocytic accessory proteins. The AP-2 alpha and AP-2 sigma subunits are thought to contribute to the recognition of the [ED]-X-X-X-L-[LI] motif. The protein is AP-2 complex subunit alpha-2 of Rattus norvegicus (Rat).